The sequence spans 343 residues: Tetraacyldisaccharide 4'-kinase (343 aa).

61–68 (GVGGNGKT) is a binding site for ATP.

It belongs to the LpxK family.

The catalysed reaction is a lipid A disaccharide + ATP = a lipid IVA + ADP + H(+). Its pathway is glycolipid biosynthesis; lipid IV(A) biosynthesis; lipid IV(A) from (3R)-3-hydroxytetradecanoyl-[acyl-carrier-protein] and UDP-N-acetyl-alpha-D-glucosamine: step 6/6. Transfers the gamma-phosphate of ATP to the 4'-position of a tetraacyldisaccharide 1-phosphate intermediate (termed DS-1-P) to form tetraacyldisaccharide 1,4'-bis-phosphate (lipid IVA). This is Tetraacyldisaccharide 4'-kinase from Colwellia psychrerythraea (strain 34H / ATCC BAA-681) (Vibrio psychroerythus).